A 629-amino-acid polypeptide reads, in one-letter code: (-)-alpha pinene synthase 1, chloroplastic (629 aa).

The transit peptide at 1–48 (MSPVSVISLPSDLCLPTSFIDRSGRELNPLHITIPNVAMRRQGKLMTR) directs the protein to the chloroplast. Positions 380, 384, and 532 each coordinate Mg(2+). The DDXXD motif motif lies at 380–384 (DDMYD).

Belongs to the terpene synthase family. Tpsd subfamily. The cofactor is Mg(2+). It depends on Mn(2+) as a cofactor.

The protein resides in the plastid. It is found in the chloroplast. The catalysed reaction is (2E)-geranyl diphosphate = (1S,5S)-alpha-pinene + diphosphate. It catalyses the reaction (2E)-geranyl diphosphate = (1S,5S)-beta-pinene + diphosphate. Its pathway is terpene metabolism; oleoresin biosynthesis. It participates in secondary metabolite biosynthesis; terpenoid biosynthesis. Functionally, monoterpene synthase (TPS) involved in the biosynthesis of monoterpene natural products included in conifer oleoresin secretions and volatile emissions; these compounds contribute to biotic and abiotic stress defense against herbivores and pathogens. Catalyzes the conversion of (2E)-geranyl diphosphate (GPP) to (-)-alpha-pinene and, to a lower extent, to (-)-beta-pinene. This Pinus contorta (Shore pine) protein is (-)-alpha pinene synthase 1, chloroplastic.